Here is a 323-residue protein sequence, read N- to C-terminus: NADH-cytochrome b5 reductase 2 (323 aa).

A helical membrane pass occupies residues 32-48 (LAPIYLGVGLIGLGVGL). Positions 72-177 (QGWVDLKLAQ…KGPIPKYPWE (106 aa)) constitute an FAD-binding FR-type domain. Residue 180–215 (KHKHICLIAGGTGITPMYQLARKIFKDPEDQTKVTL) coordinates FAD.

Belongs to the flavoprotein pyridine nucleotide cytochrome reductase family. It depends on FAD as a cofactor.

The protein resides in the mitochondrion outer membrane. It carries out the reaction 2 Fe(III)-[cytochrome b5] + NADH = 2 Fe(II)-[cytochrome b5] + NAD(+) + H(+). In terms of biological role, may mediate the reduction of outer membrane cytochrome b5. This Aspergillus fumigatus (strain ATCC MYA-4609 / CBS 101355 / FGSC A1100 / Af293) (Neosartorya fumigata) protein is NADH-cytochrome b5 reductase 2 (mcr1).